The sequence spans 154 residues: Large ribosomal subunit protein uL13 (154 aa).

The protein belongs to the universal ribosomal protein uL13 family. Part of the 50S ribosomal subunit.

In terms of biological role, this protein is one of the early assembly proteins of the 50S ribosomal subunit, although it is not seen to bind rRNA by itself. It is important during the early stages of 50S assembly. This is Large ribosomal subunit protein uL13 from Agrobacterium fabrum (strain C58 / ATCC 33970) (Agrobacterium tumefaciens (strain C58)).